We begin with the raw amino-acid sequence, 364 residues long: 3-isopropylmalate dehydrogenase (364 aa).

Residue 76 to 89 (GPKWEKLPPNEQPE) coordinates NAD(+). Residues Arg97, Arg107, Arg136, and Asp225 each contribute to the substrate site. Mg(2+) is bound by residues Asp225, Asp249, and Asp253. Residue 283-295 (GSAPDIAGKGIAN) participates in NAD(+) binding.

Belongs to the isocitrate and isopropylmalate dehydrogenases family. LeuB type 1 subfamily. As to quaternary structure, homodimer. It depends on Mg(2+) as a cofactor. Mn(2+) is required as a cofactor.

It is found in the cytoplasm. It carries out the reaction (2R,3S)-3-isopropylmalate + NAD(+) = 4-methyl-2-oxopentanoate + CO2 + NADH. It participates in amino-acid biosynthesis; L-leucine biosynthesis; L-leucine from 3-methyl-2-oxobutanoate: step 3/4. Functionally, catalyzes the oxidation of 3-carboxy-2-hydroxy-4-methylpentanoate (3-isopropylmalate) to 3-carboxy-4-methyl-2-oxopentanoate. The product decarboxylates to 4-methyl-2 oxopentanoate. This chain is 3-isopropylmalate dehydrogenase, found in Shewanella oneidensis (strain ATCC 700550 / JCM 31522 / CIP 106686 / LMG 19005 / NCIMB 14063 / MR-1).